The chain runs to 265 residues: 4-hydroxy-tetrahydrodipicolinate reductase (265 aa).

NAD(+) contacts are provided by residues glycine 7–methionine 12, aspartate 33, glycine 96–threonine 98, and alanine 120–methionine 123. Histidine 153 serves as the catalytic Proton donor/acceptor. Position 154 (histidine 154) interacts with (S)-2,3,4,5-tetrahydrodipicolinate. Lysine 157 functions as the Proton donor in the catalytic mechanism. Residue glycine 163–threonine 164 coordinates (S)-2,3,4,5-tetrahydrodipicolinate.

It belongs to the DapB family.

Its subcellular location is the cytoplasm. It carries out the reaction (S)-2,3,4,5-tetrahydrodipicolinate + NAD(+) + H2O = (2S,4S)-4-hydroxy-2,3,4,5-tetrahydrodipicolinate + NADH + H(+). It catalyses the reaction (S)-2,3,4,5-tetrahydrodipicolinate + NADP(+) + H2O = (2S,4S)-4-hydroxy-2,3,4,5-tetrahydrodipicolinate + NADPH + H(+). It participates in amino-acid biosynthesis; L-lysine biosynthesis via DAP pathway; (S)-tetrahydrodipicolinate from L-aspartate: step 4/4. Catalyzes the conversion of 4-hydroxy-tetrahydrodipicolinate (HTPA) to tetrahydrodipicolinate. This Cupriavidus pinatubonensis (strain JMP 134 / LMG 1197) (Cupriavidus necator (strain JMP 134)) protein is 4-hydroxy-tetrahydrodipicolinate reductase.